The primary structure comprises 378 residues: Succinate--CoA ligase [ADP-forming] subunit beta (378 aa).

Residues R9–K237 enclose the ATP-grasp domain. Residues K45, G52 to G54, I94, and E99 contribute to the ATP site. N192 and D206 together coordinate Mg(2+). Substrate is bound by residues N257 and G314 to T316.

Belongs to the succinate/malate CoA ligase beta subunit family. As to quaternary structure, heterotetramer of two alpha and two beta subunits. Requires Mg(2+) as cofactor.

It catalyses the reaction succinate + ATP + CoA = succinyl-CoA + ADP + phosphate. The enzyme catalyses GTP + succinate + CoA = succinyl-CoA + GDP + phosphate. The protein operates within carbohydrate metabolism; tricarboxylic acid cycle; succinate from succinyl-CoA (ligase route): step 1/1. Functionally, succinyl-CoA synthetase functions in the citric acid cycle (TCA), coupling the hydrolysis of succinyl-CoA to the synthesis of either ATP or GTP and thus represents the only step of substrate-level phosphorylation in the TCA. The beta subunit provides nucleotide specificity of the enzyme and binds the substrate succinate, while the binding sites for coenzyme A and phosphate are found in the alpha subunit. In Herpetosiphon aurantiacus (strain ATCC 23779 / DSM 785 / 114-95), this protein is Succinate--CoA ligase [ADP-forming] subunit beta.